Consider the following 806-residue polypeptide: Facilitated trehalose transporter Tret1 (806 aa).

Disordered stretches follow at residues 1 to 34 (MFGN…TTGT) and 48 to 138 (LNST…HKNQ). The Cytoplasmic portion of the chain corresponds to 1-339 (MFGNEMDDTR…LEVYRPTTNP (339 aa)). Low complexity predominate over residues 25 to 34 (GSLSTSTTGT). A helical membrane pass occupies residues 340–360 (IFIWTQVLAALSVSLGSMVVG). Residues 361-389 (FSSAYTSPALVSMKDRNITSFEVTDQSGS) lie on the Extracellular side of the membrane. The N-linked (GlcNAc...) asparagine glycan is linked to Asn-377. A helical membrane pass occupies residues 390–410 (WVGGIMPLAGLAGGILGGPLI). Residues 411-424 (EYLGRKNTILATAT) lie on the Cytoplasmic side of the membrane. Residues 425-445 (PFIISWLLIACATHVAMVLVG) form a helical membrane-spanning segment. Residues 446–447 (RA) lie on the Extracellular side of the membrane. The chain crosses the membrane as a helical span at residues 448-468 (LSGFSVGVASLSLPVYLGETV). Over 469-473 (QPEVR) the chain is Cytoplasmic. The helical transmembrane segment at 474–494 (GTLGLLPTAFGNIGILLCFVA) threads the bilayer. The Extracellular portion of the chain corresponds to 495–501 (GKYMDWS). The helical transmembrane segment at 502–522 (GLAFLGAALPIPFLLLMFLIP) threads the bilayer. At 523-585 (ETPRWYVSRG…DLMKKANLKP (63 aa)) the chain is on the cytoplasmic side. A helical transmembrane segment spans residues 586-606 (LLISLGLMFFQQLSGINAVIF). Topologically, residues 607 to 622 (YTVQIFQDAGSTIDEN) are extracellular. Residues 623 to 643 (LCTIIVGVVNFIATFIATMLI) form a helical membrane-spanning segment. The Cytoplasmic portion of the chain corresponds to 644–649 (DRLGRK). A helical transmembrane segment spans residues 650 to 670 (MLLYISDVAMIITLMTLGGFF). Over 671-681 (YVKNSGQDVSQ) the chain is Extracellular. Residues 682–702 (VGWLPLAAFVIYVLGFSLGFG) form a helical membrane-spanning segment. Residues 703–723 (PIPWLMMGEILPGKIRGSAAS) lie on the Cytoplasmic side of the membrane. Residues 724-744 (VATAFNWSCTFIVTKTFADII) form a helical membrane-spanning segment. Residues 745-750 (NAIGTH) are Extracellular-facing. A helical transmembrane segment spans residues 751-771 (GTFWMFGSICVIGLAFVIFYV). The Cytoplasmic segment spans residues 772–806 (PETQGKSLEDIERKMMGRVRRMSSVANIKPLSFNM).

Belongs to the major facilitator superfamily. Sugar transporter (TC 2.A.1.1) family. Trehalose transporter subfamily.

The protein localises to the cell membrane. Functionally, high-capacity facilitative transporter for trehalose. Does not transport maltose, sucrose or lactose. Mediates the bidirectional transfer of trehalose. Responsible for the transport of trehalose synthesized in the fat body and the incorporation of trehalose into other tissues that require a carbon source, thereby regulating trehalose levels in the hemolymph. This chain is Facilitated trehalose transporter Tret1, found in Aedes aegypti (Yellowfever mosquito).